Consider the following 267-residue polypeptide: Phosphatidylserine decarboxylase proenzyme (267 aa).

Active-site charge relay system; for autoendoproteolytic cleavage activity residues include D78, H132, and S236. Residue S236 is the Schiff-base intermediate with substrate; via pyruvic acid; for decarboxylase activity of the active site. S236 is modified (pyruvic acid (Ser); by autocatalysis).

It belongs to the phosphatidylserine decarboxylase family. PSD-B subfamily. Prokaryotic type I sub-subfamily. Heterodimer of a large membrane-associated beta subunit and a small pyruvoyl-containing alpha subunit. Pyruvate serves as cofactor. Is synthesized initially as an inactive proenzyme. Formation of the active enzyme involves a self-maturation process in which the active site pyruvoyl group is generated from an internal serine residue via an autocatalytic post-translational modification. Two non-identical subunits are generated from the proenzyme in this reaction, and the pyruvate is formed at the N-terminus of the alpha chain, which is derived from the carboxyl end of the proenzyme. The autoendoproteolytic cleavage occurs by a canonical serine protease mechanism, in which the side chain hydroxyl group of the serine supplies its oxygen atom to form the C-terminus of the beta chain, while the remainder of the serine residue undergoes an oxidative deamination to produce ammonia and the pyruvoyl prosthetic group on the alpha chain. During this reaction, the Ser that is part of the protease active site of the proenzyme becomes the pyruvoyl prosthetic group, which constitutes an essential element of the active site of the mature decarboxylase.

It localises to the cell membrane. It catalyses the reaction a 1,2-diacyl-sn-glycero-3-phospho-L-serine + H(+) = a 1,2-diacyl-sn-glycero-3-phosphoethanolamine + CO2. It functions in the pathway phospholipid metabolism; phosphatidylethanolamine biosynthesis; phosphatidylethanolamine from CDP-diacylglycerol: step 2/2. Functionally, catalyzes the formation of phosphatidylethanolamine (PtdEtn) from phosphatidylserine (PtdSer). This chain is Phosphatidylserine decarboxylase proenzyme, found in Helicobacter pylori (strain ATCC 700392 / 26695) (Campylobacter pylori).